A 171-amino-acid chain; its full sequence is Der GTPase-activating protein YihI (171 aa).

Disordered stretches follow at residues 1–99 (MKKP…PQAE) and 145–171 (GLSYEDDEDDEEEEKQDDMMRLLKGGN). Positions 20–30 (TREELNQEARD) are enriched in basic and acidic residues. A compositionally biased stretch (low complexity) spans 40–59 (HSAGSRANGSSASGSTAQNS). Positions 148–160 (YEDDEDDEEEEKQ) are enriched in acidic residues.

This sequence belongs to the YihI family. As to quaternary structure, interacts with Der.

A GTPase-activating protein (GAP) that modifies Der/EngA GTPase function. May play a role in ribosome biogenesis. The protein is Der GTPase-activating protein YihI of Enterobacter sp. (strain 638).